Here is a 239-residue protein sequence, read N- to C-terminus: Fatty acid metabolism regulator protein (239 aa).

Positions 6–74 (KGPASFAEKY…HGKPTRVNNF (69 aa)) constitute an HTH gntR-type domain. Positions 34 to 53 (ERELSELIGVTRTTLREVLQ) form a DNA-binding region, H-T-H motif.

Homodimer.

It is found in the cytoplasm. In terms of biological role, multifunctional regulator of fatty acid metabolism. The sequence is that of Fatty acid metabolism regulator protein from Shewanella halifaxensis (strain HAW-EB4).